A 249-amino-acid chain; its full sequence is Diaminopimelate epimerase (249 aa).

Substrate is bound by residues Asn-11 and Asn-60. The Proton donor role is filled by Cys-69. Substrate contacts are provided by residues Gly-70–Asn-71, Asn-164, and Glu-182–Arg-183. The Proton acceptor role is filled by Cys-192. Gly-193 to Thr-194 contributes to the substrate binding site.

The protein belongs to the diaminopimelate epimerase family. As to quaternary structure, homodimer.

The protein resides in the cytoplasm. The enzyme catalyses (2S,6S)-2,6-diaminopimelate = meso-2,6-diaminopimelate. The protein operates within amino-acid biosynthesis; L-lysine biosynthesis via DAP pathway; DL-2,6-diaminopimelate from LL-2,6-diaminopimelate: step 1/1. Functionally, catalyzes the stereoinversion of LL-2,6-diaminopimelate (L,L-DAP) to meso-diaminopimelate (meso-DAP), a precursor of L-lysine and an essential component of the bacterial peptidoglycan. The polypeptide is Diaminopimelate epimerase (Campylobacter jejuni (strain RM1221)).